A 489-amino-acid polypeptide reads, in one-letter code: Rhamnulokinase (489 aa).

Residue 13 to 17 (ASSGR) participates in ATP binding. Cysteines 68 and 222 form a disulfide. Substrate-binding positions include Gly-83 and 236–238 (HDT). The active-site Proton acceptor is Asp-237. Thr-259 is a binding site for ATP. Asn-296 serves as a coordination point for substrate. Residue Gln-304 coordinates ATP. A disulfide bridge links Cys-353 with Cys-370. Gly-402 is a binding site for ATP. Residues Cys-413 and Cys-417 are joined by a disulfide bond.

This sequence belongs to the rhamnulokinase family. It depends on Mg(2+) as a cofactor.

The enzyme catalyses L-rhamnulose + ATP = L-rhamnulose 1-phosphate + ADP + H(+). The protein operates within carbohydrate degradation; L-rhamnose degradation; glycerone phosphate from L-rhamnose: step 2/3. Its function is as follows. Involved in the catabolism of L-rhamnose (6-deoxy-L-mannose). Catalyzes the transfer of the gamma-phosphate group from ATP to the 1-hydroxyl group of L-rhamnulose to yield L-rhamnulose 1-phosphate. The sequence is that of Rhamnulokinase from Salmonella schwarzengrund (strain CVM19633).